A 942-amino-acid polypeptide reads, in one-letter code: Endoprotease bli-4 (942 aa).

Positions M1 to T22 are cleaved as a signal peptide. Residues I23–R116 constitute a propeptide that is removed on maturation. Residues D117 to S871 are Lumenal-facing. Position 124 (D124) interacts with Ca(2+). A disordered region spans residues P130–F160. Residues Q168 to V483 enclose the Peptidase S8 domain. A glycan (N-linked (GlcNAc...) asparagine) is linked at N195. D202 (charge relay system) is an active-site residue. D203 lines the substrate pocket. Residues D211, D223, D228, and D230 each contribute to the Ca(2+) site. The tract at residues D211–G242 is disordered. D238–N239 is a binding site for substrate. The Charge relay system role is filled by H241. Positions 252, 255, 257, and 259 each coordinate Ca(2+). Cystine bridges form between C258-C407 and C350-C380. Residues E283, S300–D305, D311, and A339–N342 contribute to the substrate site. D305 lines the Ca(2+) pocket. D348 lines the Ca(2+) pocket. D353 and Y355 together coordinate substrate. Residue E378 coordinates Ca(2+). The active-site Charge relay system is the S415. S415 is a binding site for substrate. The region spanning T491–P629 is the P/Homo B domain. Cysteines 498 and 527 form a disulfide. N519 carries an N-linked (GlcNAc...) asparagine glycan. FU repeat units lie at residues N674–D723, D725–D777, and G804–S850. N-linked (GlcNAc...) asparagine glycosylation occurs at N868. A helical transmembrane segment spans residues G872–C892. Residues K893–V942 are Cytoplasmic-facing. The tract at residues G922–V942 is disordered. Positions D926–V935 are enriched in acidic residues.

The protein belongs to the peptidase S8 family. Furin subfamily. Ca(2+) is required as a cofactor. In terms of tissue distribution, in larvae and adults, expressed in all hypodermal cells, vulva and ventral nerve cords. Most highly expressed isoform in the embryonic epidermis. As to expression, expressed primarily in the germline. In terms of tissue distribution, expressed primarily in pharyngeal epithelial cells.

The protein resides in the membrane. Serine endoprotease which cleaves proproteins at paired basic amino acids at the consensus RX(K/R)R motif. Involved in N-terminal processing of cuticle collagens and plays a role in cuticle biosynthesis. May cleave both sqt-3 and dpy-17 collagens to promote their secretion. Acts in ASEL sensory neurons to regulate high salt chemotaxis responses probably by cleaving insulin-like protein ins-6 into its mature and active form. Essential for embryonic and larval development. In terms of biological role, involved in cuticle biosynthesis but dispensable for larval development. This chain is Endoprotease bli-4 (bli-4), found in Caenorhabditis elegans.